Consider the following 277-residue polypeptide: MSSPMPQSSLNNSQVANMIDESNETPSTTPPMISNTNTPVPEIEMEEPNAPQDNTVAPNSIDGEKVQEENEDDDEQEEEEEEEEEEEESLSLPLSKIKKIFKMDPDYLAASQSAVYATGLATELFIQYFTEQSLVLAKMDKRKKLQYKDFSNAVASQDSLNFLSDTVPKTQPIGELINSKKVNVNSHDNNEIREIDNTEIDEIEVDEPVNATRKVKPLAKGQQTLNFSATNTATESINPMPIKKSVISDIVTTDNETEVTSKEATEEVEDQDVIMIN.

2 stretches are compositionally biased toward polar residues: residues Met-1–Ala-16 and Glu-24–Pro-39. The interval Met-1–Ser-91 is disordered. The span at Glu-69–Ser-89 shows a compositional bias: acidic residues.

In terms of assembly, heterotetramer. Consists of four subunits: POL2, DPB2, DPB3 and DPB4.

It localises to the nucleus. Functionally, as accessory component of the DNA polymerase epsilon (DNA polymerase II) participates in chromosomal DNA replication. The protein is DNA polymerase epsilon subunit C (DPB3) of Debaryomyces hansenii (strain ATCC 36239 / CBS 767 / BCRC 21394 / JCM 1990 / NBRC 0083 / IGC 2968) (Yeast).